Reading from the N-terminus, the 295-residue chain is Reticulon-like protein 1 (295 aa).

Residues Met1 to Asn50 are Cytoplasmic-facing. Residues Asn20–Ala220 form the Reticulon domain. A helical membrane pass occupies residues Leu51 to Ser73. Residues Lys74–Ser142 are Lumenal-facing. A helical membrane pass occupies residues Trp143–Ile163. Topologically, residues Tyr164–Ala295 are cytoplasmic. Phosphothreonine occurs at positions 186 and 219. Residues Thr219–Lys235 are compositionally biased toward polar residues. Positions Thr219–Ala295 are disordered. At Ser232 the chain carries Phosphoserine. Residues Ser265–Ala295 adopt a coiled-coil conformation.

In terms of assembly, interacts with POM33.

It is found in the endoplasmic reticulum membrane. The sequence is that of Reticulon-like protein 1 (RTN1) from Saccharomyces cerevisiae (strain ATCC 204508 / S288c) (Baker's yeast).